The chain runs to 4691 residues: Plectin (4691 aa).

The tract at residues 1 to 1478 (MVAGMLMPLD…SELTTLTSQY (1478 aa)) is globular 1. A Phosphoserine modification is found at R21. The residue at position 26 (V26) is a Phosphotyrosine. 2 disordered regions span residues 113 to 161 (RSPH…TPVV) and 167 to 186 (GTLARPGPEPAPATDERDRV). Basic and acidic residues predominate over residues 137–154 (DPAREERQVYRRKEREEG). An actin-binding region spans residues 181–411 (DERDRVQKKT…YVSSLYDAMP (231 aa)). Calponin-homology (CH) domains lie at 185–293 (RVQK…LHFQ) and 306–411 (MTAK…DAMP). The stretch at 653-727 (LQSTQRRPEL…ERARNDESQL (75 aa)) is one Spectrin 1 repeat. Position 728 is a phosphoserine (S728). 2 Spectrin repeats span residues 748 to 832 (KLLN…REDH) and 845 to 938 (LQTQ…AIVQ). Position 823 is a phosphothreonine (T823). The SH3 domain occupies 949-1006 (RGHVPLIAVCDYKQVEVTVHKGDQCQLVGPAQPSHWKVLSGSSSEAAVPSVCFLVPPP). The interval 963–4572 (VEVTVHKGDQ…ARTAQKLRDV (3610 aa)) is required for interaction with intermediate filament proteins. S1055 is modified (phosphoserine). One copy of the Spectrin 4 repeat lies at 1323 to 1423 (RERVTQLLER…QKFAKQYINA (101 aa)). Residue S1443 is modified to Phosphoserine. Coiled coils occupy residues 1477–1697 (QYIK…ERRL) and 1729–2764 (SFAE…TTQA). A central fibrous rod domain region spans residues 1479-2762 (IKFISETLRR…ALAHSEIATT (1284 aa)). Residues 1626–1653 (RAEEAEAQKRQAQEEAERLRRQVQDESQ) form a disordered region. Position 1729 is a phosphoserine (S1729). Position 1733 is an N6-acetyllysine (K1733). Disordered stretches follow at residues 1801 to 1835 (SLAQADAEKQKEEAEREARRRGKAEEQAVRQRELA), 2100 to 2141 (AEDT…SLAA), and 2223 to 2317 (RLRS…KHKK). 4 stretches are compositionally biased toward basic and acidic residues: residues 1806-1835 (DAEKQKEEAEREARRRGKAEEQAVRQRELA), 2100-2116 (AEDTMRSKEQAELEAAR), 2124-2136 (EEQRRREAEERVQ), and 2223-2266 (RLRS…KQSA). The segment covering 2267-2280 (EEQAQAQAQAQAAA) has biased composition (low complexity). Positions 2281–2296 (EKLRKEAEQEAARRAQ) are enriched in basic and acidic residues. Phosphoserine is present on S2639. K2644 carries the N6-acetyllysine modification. Residues 2675–2728 (LREEQQRQQQQMEQEKQELMASMEEARRRQREAEEGVRRKQEELQHLEQQRQQQ) are disordered. The segment covering 2687-2728 (EQEKQELMASMEEARRRQREAEEGVRRKQEELQHLEQQRQQQ) has biased composition (basic and acidic residues). The globular 2 stretch occupies residues 2763–4691 (QAASTKALPN…SLGGPESAVA (1929 aa)). S2781 carries the phosphoserine modification. Y2788 carries the phosphotyrosine modification. 6 Plectin repeats span residues 2795 to 2832 (QKVPAQQLQEAGILSQEELQRLAQGHTTVAELTQREDV), 2833 to 2870 (YRYLKGRSSIAGLLLKPTNEKLSVYTALQRQLLSPGTA), 2871 to 2908 (LILLEAQAASGFLLDPVRNRRLTVNEAVKEGVVGPELH), 2909 to 2946 (HKLLSAERAVTGYKDPYTGEQISLFQAMKKDLIVRDHG), 2947 to 2984 (VRLLEAQIATGGIIDPVHSHRVPVDVAYKRGYFDEEMN), and 2988 to 3022 (SDPSDDTKGFFDPNTHENLTYLQLLERCVEDPETG). Residue S2809 is modified to Phosphoserine. Residue T2893 is modified to Phosphothreonine. Position 3040 is a phosphotyrosine (Y3040). N6-acetyllysine occurs at positions 3060 and 3098. Plectin repeat units follow at residues 3123–3160 (ALVPAAELLDSGVISHELYQQLQRGERSVREVAEADSV), 3161–3198 (RQALRGTNVIAGVWLEEAGQKLSIYEALKKDLLQPEVA), 3199–3236 (VALLEAQAGTGHIIDPATSARLTVDEAVRAGLVGPELH), 3237–3274 (EKLLSAEKAVTGYRDPYSGQSVSLFQALKKGLIPREQG), 3275–3312 (LRLLDAQLSTGGIVDPSKSHRVPLDVAYARGYLDKETN), and 3315–3350 (LTSPRDDARVYHDPSTQEPVTYSQLQQRCRSDQLTG). Basic and acidic residues predominate over residues 3312 to 3326 (NRALTSPRDDARVYH). The segment at 3312 to 3338 (NRALTSPRDDARVYHDPSTQEPVTYSQ) is disordered. Polar residues predominate over residues 3328-3338 (PSTQEPVTYSQ). Y3369 carries the phosphotyrosine modification. K3427 is subject to N6-acetyllysine. Plectin repeat units follow at residues 3492-3529 (RTLLQGSGCLAGIYLEDSKEKVTIYEAMRRGLLRPSTA), 3530-3567 (TLLLEAQAATGFLVDPVRNQRLYVHEAVKAGVVGPELH), 3568-3605 (EKLLSAEKAVTGYKDPYSGNTISLFQAMKKGLVLRDHA), 3606-3643 (IRLLEAQVATGGIIDPVHSHRLPVDVAYQRGYFDEEMN), and 3647-3681 (ADPSDDTKGFFDPNTHENLTYLQLLERCVEDPETG). T3792 is modified (phosphothreonine). The residue at position 3797 (Y3797) is a Phosphotyrosine. Plectin repeat units lie at residues 3827–3864 (WRYLYGTGAVAGVYLPGSRQTLTIYQALKKGLLSAEVA), 3865–3902 (RLLLEAQAATGFLLDPVKGERLTVDEAVRKGLVGPELH), 3903–3940 (DRLLSAERAVTGYRDPYTEQTISLFQAMKKELIPAEEA), 3941–3978 (LRLLDAQLATGGIVDPRLGFHLPLEVAYQRGYLNKDTH), and 3982–4015 (SEPSEVRSYVDPSTDERLSYTQLLKRCRRDDPSG). Positions 3954–4291 (VDPRLGFHLP…KRRVVIVDPE (338 aa)) are required for interaction with type2 keratins, DES and VIM. T4037 is modified (phosphothreonine). S4061 is modified (phosphoserine). Plectin repeat units follow at residues 4070-4107 (QKFLEGTSCIAGVFVDATKERLSVYQAMKKGIIRPGTA), 4108-4145 (FELLEAQAATGYVIDPIKGLKLTVEEAVRMGIVGPEFK), 4146-4183 (DKLLSAERAVTGYKDPYSGKLISLFQAMKKGLILKDHG), 4184-4221 (IRLLEAQIATGGIIDPEESHRLPVEVAYKRGLFDEEMN), 4225-4259 (TDPSDDTKGFFDPNTEENLTYLQLMERCITDPQTG), and 4272-4312 (RKTS…HQTY). A binding to intermediate filaments region spans residues 4257–4307 (QTGLCLLPLKEKKRERKTSSKSSVRKRRVVIVDPETGKEMSVYEAYRKGLI). Residues 4387–4420 (FRSRSSSVGSSSSYPISSAGPRTQLASWSDPTEE) are disordered. S4389, S4391, S4392, S4393, S4396, S4397, S4398, and S4399 each carry phosphoserine. Positions 4389 to 4404 (SRSSSVGSSSSYPISS) are enriched in low complexity. Residue Y4400 is modified to Phosphotyrosine. S4403 and S4413 each carry phosphoserine. The span at 4406 to 4416 (GPRTQLASWSD) shows a compositional bias: polar residues. Plectin repeat units lie at residues 4415–4452 (SDPTEETGPVAGILDTETLEKVSITEAMHRNLVDNITG), 4453–4490 (QRLLEAQACTGGIIDPSTGERFPVTEAVNKGLVDKIMV), 4491–4528 (DRINLAQKAFCGFEDPRTKTKMSAAQALKKGWLYYEAG), 4529–4566 (QRFLEVQYLTGGLIEPDTPGRVSLDEALQRGTVDARTA), and 4567–4604 (QKLRDVSAYSKYLTCPKTKLKISYKDALDRSMVEEGTG). Phosphothreonine is present on T4418. A required for efficient interaction with KRT5 and KRT14 heterodimers region spans residues 4503–4572 (FEDPRTKTKM…ARTAQKLRDV (70 aa)). Position 4546 is a phosphothreonine; by CDK1 (T4546). A phosphoserine mark is found at S4614 and S4620. Low complexity predominate over residues 4618–4678 (YYSPYSVSGS…SGYGRRYASG (61 aa)). Residues 4618-4691 (YYSPYSVSGS…SLGGPESAVA (74 aa)) are disordered. The residue at position 4622 (Y4622) is a Phosphotyrosine. Residues S4623, S4625, and S4629 each carry the phosphoserine modification. T4630 is subject to Phosphothreonine. The 4 X 4 AA tandem repeats of G-S-R-X stretch occupies residues 4632–4647 (GSRTGSRTGSRAGSRR). Residue S4633 is modified to Phosphoserine. Residues R4634 and R4647 each carry the omega-N-methylarginine modification. Phosphoserine is present on residues S4649 and S4682.

The protein belongs to the plakin or cytolinker family. In terms of assembly, homodimer or homotetramer. Interacts (via actin-binding domain) with SYNE3. Interacts (via calponin-homology (CH) 1 domain) with VIM (via rod region). Interacts (via N-terminus) with DST isoform 2 (via N-terminus). Interacts with FER. Interacts with TOR1A. Interacts with ANK3. Identified in complexes that contain VIM, EZR, AHNAK, BFSP1, BFSP2, ANK2, PLEC, PRX and spectrin. As to quaternary structure, interacts with KRT14, heterodimers consisting of KRT8 and KRT18, heterodimers consisting of KRT5 and KRT14, heterodimers consisting of KRT14 and KRT15, and heterodimers consisting of KRT1 and KRT10. Interacts with DES and VIM. Post-translationally, phosphorylated by CDK1; regulates dissociation from intermediate filaments during mitosis. Isoform PLEC-1A is phosphorylated on Ser-21. Isoform PLEC-1A is phosphorylated on Tyr-26. In terms of tissue distribution, detected in eye lens fiber cells (at protein level). Expressed at high levels in lung, brain, small intestine, muscle, heart and skin with lower levels found in kidney, liver, uterus, spleen and salivary gland.

It is found in the cytoplasm. It localises to the cytoskeleton. The protein localises to the cell junction. Its subcellular location is the hemidesmosome. The protein resides in the cell projection. It is found in the podosome. Its function is as follows. Interlinks intermediate filaments with microtubules and microfilaments and anchors intermediate filaments to desmosomes or hemidesmosomes. May be involved not only in the cross-linking and stabilization of cytoskeletal intermediate filaments network, but also in the regulation of their dynamics. In Mus musculus (Mouse), this protein is Plectin (Plec).